The sequence spans 137 residues: Putative pumilio homolog 25 (137 aa).

2 Pumilio repeats span residues 70–105 (EFDS…LPHS) and 108–137 (SVLV…TRLA).

The protein resides in the cytoplasm. Functionally, sequence-specific RNA-binding protein that regulates translation and mRNA stability by binding the 3'-UTR of target mRNAs. The protein is Putative pumilio homolog 25 (APUM25) of Arabidopsis thaliana (Mouse-ear cress).